The primary structure comprises 499 residues: Glycerol kinase (499 aa).

Residue T17 coordinates ADP. Residues T17, T18, and S19 each coordinate ATP. Sn-glycerol 3-phosphate is bound at residue T17. R21 contacts ADP. Residues R87, E88, Y139, and D243 each coordinate sn-glycerol 3-phosphate. Glycerol-binding residues include R87, E88, Y139, D243, and Q244. The ADP site is built by T265 and G308. The ATP site is built by T265, G308, Q312, and G409. Residues G409 and N413 each coordinate ADP.

It belongs to the FGGY kinase family.

It catalyses the reaction glycerol + ATP = sn-glycerol 3-phosphate + ADP + H(+). It functions in the pathway polyol metabolism; glycerol degradation via glycerol kinase pathway; sn-glycerol 3-phosphate from glycerol: step 1/1. Its activity is regulated as follows. Inhibited by fructose 1,6-bisphosphate (FBP). Its function is as follows. Key enzyme in the regulation of glycerol uptake and metabolism. Catalyzes the phosphorylation of glycerol to yield sn-glycerol 3-phosphate. The chain is Glycerol kinase from Pseudomonas putida (strain GB-1).